The sequence spans 175 residues: Replication restart protein PriC (175 aa).

It belongs to the PriC family. Monomer. Oligomerizes in the absence of DNA. Component of the replication restart primosome, which is composed of PriA, PriB, PriC, DnaB and DnaT; DnaG primase associates transiently with this complex. Interacts with the C-terminus of SSB; this interaction is required for DnaB loading onto substrate replication forks. Interacts with DnaB alone and in the DnaB-DnaC complex, probably 1:1 binding with DnaB.

Its function is as follows. Involved in the restart of stalled replication forks, which reloads the replicative helicase (DnaB) on sites other than the origin of replication. Recognizes abandoned replication forks and remodels DNA single-stranded binding protein (SSB) on ssDNA to uncover a loading site for DnaB. There are several restart pathways, the PriA-PriC pathway is a minor restart pathway. Also part of the minor PriC-Rep pathway for restart of stalled replication forks, which has a different substrate specificity than PriA. priB and priC have redundant roles in the cell. Stimulates the 3'-5' helicase activity of Rep helicase in vitro. In vitro can load the DnaB replicative helicase from a DnaB-DnaC complex on an SSB-coated stalled replication fork with no leading- or lagging-strand (or with a gap between the leading strand and fork junction) in the absence of other primosome proteins (PriA, PriB or DnaT). Also part of the major restart pathway with PriA, PriB, DnaB, DnaT and DnaG primase. PriC may contribute to the stability of the preprimosome complex. Preferentially binds approximately 7-9 nucleotides of single-stranded (ss)DNA, also binds double-stranded (ds)DNA. PriB is probably more important in the cell than PriC. This is Replication restart protein PriC from Escherichia coli (strain K12).